A 465-amino-acid polypeptide reads, in one-letter code: GTPase Der (465 aa).

2 EngA-type G domains span residues 3–167 and 179–352; these read PLVA…PEEG and VRIA…ASAT. GTP is bound by residues 9-16, 57-61, 119-122, 185-192, 232-236, and 297-300; these read GRPNVGKS, DTGGI, NKID, DTAGL, and NKWD. The region spanning 353–437 is the KH-like domain; the sequence is HEFSTSEVNQ…PVRFIFREGA (85 aa).

The protein belongs to the TRAFAC class TrmE-Era-EngA-EngB-Septin-like GTPase superfamily. EngA (Der) GTPase family. As to quaternary structure, associates with the 50S ribosomal subunit.

Functionally, GTPase that plays an essential role in the late steps of ribosome biogenesis. The sequence is that of GTPase Der from Xanthomonas axonopodis pv. citri (strain 306).